The sequence spans 244 residues: Salivary antigen-5 (244 aa).

An N-terminal signal peptide occupies residues Met1–Ala23. In terms of domain architecture, SCP spans Leu46–Tyr202. N-linked (GlcNAc...) asparagine glycosylation is found at Asn106 and Asn172.

It belongs to the CRISP family. Venom allergen 5-like subfamily. As to expression, salivary gland (at protein level).

It is found in the secreted. Inhibits host platelet aggregation induced by low doses of collagen. This Triatoma infestans (Assassin bug) protein is Salivary antigen-5.